A 473-amino-acid chain; its full sequence is Uronate isomerase (473 aa).

The protein belongs to the metallo-dependent hydrolases superfamily. Uronate isomerase family.

The enzyme catalyses D-glucuronate = D-fructuronate. The catalysed reaction is aldehydo-D-galacturonate = keto-D-tagaturonate. It functions in the pathway carbohydrate metabolism; pentose and glucuronate interconversion. The chain is Uronate isomerase from Bacillus licheniformis (strain ATCC 14580 / DSM 13 / JCM 2505 / CCUG 7422 / NBRC 12200 / NCIMB 9375 / NCTC 10341 / NRRL NRS-1264 / Gibson 46).